Consider the following 258-residue polypeptide: Synapse differentiation-inducing gene protein 1 (258 aa).

Residues 1–181 (MDGIIEQKSV…NFLMMPPRDH (181 aa)) are Cytoplasmic-facing. Ser137 bears the Phosphoserine mark. The helical transmembrane segment at 182–202 (LGLSVFSMLCCFWPLGIAAFY) threads the bilayer. Topologically, residues 203–228 (LSHETNKAVAKGDFHQASTSSRRALF) are extracellular. Residues 229-249 (LAVLSITIGTGIYVGVAVALI) constitute an intramembrane region (helical). At 250 to 258 (AYLSKNNHL) the chain is on the extracellular side.

It belongs to the CD225/Dispanin family. As to quaternary structure, homodimer. Interacts with GRIA1 and GRIA2. In terms of tissue distribution, brain-specific. Expressed in Purkinje neurons in cerebellum. Also detected in the hippocampus. Found at excitatory synapses and postsynaptic cells.

It localises to the cell membrane. It is found in the early endosome membrane. The protein localises to the postsynaptic density membrane. The protein resides in the synapse. Its subcellular location is the cell projection. It localises to the dendrite. It is found in the dendritic spine. Functionally, may regulate AMPA receptor content at nascent synapses, and have a role in postsynaptic development and maturation. The sequence is that of Synapse differentiation-inducing gene protein 1 (Syndig1) from Mus musculus (Mouse).